The chain runs to 258 residues: Short-chain dehydrogenase/reductase olcF (258 aa).

The NADP(+) site is built by valine 12, aspartate 58, and arginine 120. Serine 138 functions as the Proton donor in the catalytic mechanism. Positions 152, 156, and 185 each coordinate NADP(+). Tyrosine 152 (proton acceptor) is an active-site residue. The active-site Lowers pKa of active site Tyr is the lysine 156.

The protein belongs to the short-chain dehydrogenases/reductases (SDR) family.

It participates in secondary metabolite biosynthesis; terpenoid biosynthesis. Its function is as follows. Short-chain dehydrogenase/reductase; part of the gene cluster that mediates the biosynthesis of 15-deoxyoxalicine B. The first step of the pathway is the synthesis of nicotinyl-CoA from nicotinic acid by the nicotinic acid-CoA ligase olcI. Nicotinyl-CoA is then a substrate of polyketide synthase olcA to produce 4-hydroxy-6-(3-pyridinyl)-2H-pyran-2-one (HPPO) which is further prenylated by the polyprenyl transferase olcH to yield geranylgeranyl-HPPO. Geranylgeranyl pyrophosphate is provided by the cluster-specific geranylgeranyl pyrophosphate synthase olcC. The FAD-dependent monooxygenase olcE catalyzes the epoxidation of geranylgeranyl-HPPO and the terpene cyclase olcD catalyzes the cyclization of the terpenoid component, resulting in the formation of the tricyclic terpene moiety seen in predecaturin E. The cytochrome P450 monooxygenase then catalyzes the allylic oxidation of predecaturin E, which is followed by spirocylization with concomitant loss of one molecule of water to form decaturin E. Decaturin E is the substrate of the cytochrome P450 monooxygenase olcJ which hydroxylates it at the C-29 position to form decaturin F. The short-chain dehydrogenase/reductase olcF may catalyze the oxidation of decaturin F to generate the 29-hydroxyl-27-one intermediate, and subsequent hemiacetal formation probably leads to the formation of decaturin C. The dioxygenase olcK may be a peroxisomal enzyme that catalyzes the hydroxylation of decaturin C into decaturin A once decaturin C is shuttled into the peroxisome by the MFS transporter olcL. Finally the cytochrome P450 monooxygenase olcB catalyzes the oxidative rearrangement to yield 15-deoxyoxalicine B. In the absence of olcJ, decaturin E may be shunted to a pathway in which it is oxidized to a ketone, possibly by olcF, to form decaturin D, which undergoes further allylic oxidation to yield decaturin G. Moreover, in the absence of oclK or oclL, oclB can convert decaturin C into 15-deoxyoxalicine A. The chain is Short-chain dehydrogenase/reductase olcF from Penicillium canescens.